Consider the following 149-residue polypeptide: 3-dehydroquinate dehydratase (149 aa).

The active-site Proton acceptor is Tyr-26. Positions 77, 83, and 90 each coordinate substrate. His-103 functions as the Proton donor in the catalytic mechanism. Substrate is bound by residues 104 to 105 (LS) and Arg-114.

The protein belongs to the type-II 3-dehydroquinase family. Homododecamer.

The enzyme catalyses 3-dehydroquinate = 3-dehydroshikimate + H2O. It participates in metabolic intermediate biosynthesis; chorismate biosynthesis; chorismate from D-erythrose 4-phosphate and phosphoenolpyruvate: step 3/7. In terms of biological role, catalyzes a trans-dehydration via an enolate intermediate. This chain is 3-dehydroquinate dehydratase, found in Vibrio vulnificus (strain YJ016).